Consider the following 300-residue polypeptide: tRNA-cytidine(32) 2-sulfurtransferase (300 aa).

The PP-loop motif signature appears at 57 to 62; it reads SGGKDS. Cys132, Cys135, and Cys223 together coordinate [4Fe-4S] cluster.

This sequence belongs to the TtcA family. As to quaternary structure, homodimer. Mg(2+) is required as a cofactor. [4Fe-4S] cluster serves as cofactor.

Its subcellular location is the cytoplasm. The catalysed reaction is cytidine(32) in tRNA + S-sulfanyl-L-cysteinyl-[cysteine desulfurase] + AH2 + ATP = 2-thiocytidine(32) in tRNA + L-cysteinyl-[cysteine desulfurase] + A + AMP + diphosphate + H(+). The protein operates within tRNA modification. Its function is as follows. Catalyzes the ATP-dependent 2-thiolation of cytidine in position 32 of tRNA, to form 2-thiocytidine (s(2)C32). The sulfur atoms are provided by the cysteine/cysteine desulfurase (IscS) system. The protein is tRNA-cytidine(32) 2-sulfurtransferase of Xanthomonas campestris pv. campestris (strain 8004).